Here is a 190-residue protein sequence, read N- to C-terminus: MPVVSNTELSMRRQEILEGARRCFAEHGYEGATVRRLEETVGKSRGAIFHHFSDKENLFLALAREDAARMAEVVAENGLVEVMRDMLAHPERHDWLATRLEITKMLRTDPSFRNRWIEHQRVLDDAVLERLQRNAHLGRMRDDVPIDVLHTYLETVLDGFISRLASGGDTDNLERVLDLVEESVRSSQPS.

The 61-residue stretch at Ser-10–Met-70 folds into the HTH tetR-type domain. The segment at residues Thr-33–Phe-52 is a DNA-binding region (H-T-H motif). Citrate is bound by residues Leu-79–Val-80, Arg-130, and Asn-134. Glu-181 is a binding site for Mg(2+). Arg-185 provides a ligand contact to citrate.

Homodimer.

Its function is as follows. AcnR negatively controls the expression of the aconitase gene acn. The polypeptide is HTH-type transcriptional repressor AcnR (Corynebacterium diphtheriae (strain ATCC 700971 / NCTC 13129 / Biotype gravis)).